Reading from the N-terminus, the 498-residue chain is PHD finger protein 10 (498 aa).

Low complexity predominate over residues 1–10; the sequence is MAAAAGPGAA. Residues 1-62 form a disordered region; it reads MAAAAGPGAA…SSRSCETSSQ (62 aa). Ala-2 is subject to N-acetylalanine. 3 positions are modified to phosphoserine: Ser-12, Ser-36, and Ser-50. Residues 89–185 form an essential to induce neural progenitor proliferation region; it reads MLQEQVSEYL…HYKEYSQMQQ (97 aa). The SAY stretch occupies residues 89–295; the sequence is MLQEQVSEYL…PPLDPELPAL (207 aa). Lys-241 participates in a covalent cross-link: Glycyl lysine isopeptide (Lys-Gly) (interchain with G-Cter in SUMO2). Phosphoserine is present on Ser-270. Over residues 285–296 the composition is skewed to low complexity; the sequence is EPPLDPELPALD. A disordered region spans residues 285 to 368; it reads EPPLDPELPA…KRSVLSKSVP (84 aa). An essential to induce neural progenitor proliferation region spans residues 292–334; that stretch reads LPALDSDGDSDDGEDGRGDEKRKNKGTSDSSSGNVSEGESPPD. Phosphoserine is present on residues Ser-297, Ser-301, Ser-327, and Ser-331. The span at 318-328 shows a compositional bias: polar residues; sequence TSDSSSGNVSE. Residues 345–359 show a composition bias toward basic and acidic residues; it reads KSKDKAATPRKDGPK. The segment at 379 to 436 adopts a PHD-type 1; degenerate zinc-finger fold; that stretch reads ICGICLKGKESNKKGKAESLIHCSQCENSGHPSCLDMTMELVSMIKTYPWQCMECKTC. Lys-385 participates in a covalent cross-link: Glycyl lysine isopeptide (Lys-Gly) (interchain with G-Cter in SUMO2). The segment at 438 to 481 adopts a PHD-type 2; degenerate zinc-finger fold; it reads ICGQPHHEEEMMFCDMCDRGYHTFCVGLGAIPSGRWICDCCQRA.

The protein belongs to the SAYP family. As to quaternary structure, component of neural progenitors-specific chromatin remodeling complex (npBAF complex) composed of at least, ARID1A/BAF250A or ARID1B/BAF250B, SMARCD1/BAF60A, SMARCD3/BAF60C, SMARCA2/BRM/BAF190B, SMARCA4/BRG1/BAF190A, SMARCB1/BAF47, SMARCC1/BAF155, SMARCE1/BAF57, SMARCC2/BAF170, PHF10/BAF45A, ACTL6A/BAF53A and actin. Interacts with ACTL6A/BAF53A, SMARCA2/BRM/BAF190B, SMARCA4/BRG1/BAF190A and PBRM1/BAF180.

It is found in the nucleus. In terms of biological role, involved in transcription activity regulation by chromatin remodeling. Belongs to the neural progenitors-specific chromatin remodeling complex (npBAF complex) and is required for the proliferation of neural progenitors. During neural development a switch from a stem/progenitor to a post-mitotic chromatin remodeling mechanism occurs as neurons exit the cell cycle and become committed to their adult state. The transition from proliferating neural stem/progenitor cells to post-mitotic neurons requires a switch in subunit composition of the npBAF and nBAF complexes. As neural progenitors exit mitosis and differentiate into neurons, npBAF complexes which contain ACTL6A/BAF53A and PHF10/BAF45A, are exchanged for homologous alternative ACTL6B/BAF53B and DPF1/BAF45B or DPF3/BAF45C subunits in neuron-specific complexes (nBAF). The npBAF complex is essential for the self-renewal/proliferative capacity of the multipotent neural stem cells. The nBAF complex along with CREST plays a role regulating the activity of genes essential for dendrite growth. The sequence is that of PHD finger protein 10 (PHF10) from Homo sapiens (Human).